Here is a 111-residue protein sequence, read N- to C-terminus: Aspartate 1-decarboxylase (111 aa).

Serine 25 acts as the Schiff-base intermediate with substrate; via pyruvic acid in catalysis. At serine 25 the chain carries Pyruvic acid (Ser). Threonine 57 contributes to the substrate binding site. Tyrosine 58 acts as the Proton donor in catalysis. 73 to 75 is a binding site for substrate; sequence GPA.

It belongs to the PanD family. Heterooctamer of four alpha and four beta subunits. Requires pyruvate as cofactor. Is synthesized initially as an inactive proenzyme, which is activated by self-cleavage at a specific serine bond to produce a beta-subunit with a hydroxyl group at its C-terminus and an alpha-subunit with a pyruvoyl group at its N-terminus.

It is found in the cytoplasm. The enzyme catalyses L-aspartate + H(+) = beta-alanine + CO2. The protein operates within cofactor biosynthesis; (R)-pantothenate biosynthesis; beta-alanine from L-aspartate: step 1/1. Functionally, catalyzes the pyruvoyl-dependent decarboxylation of aspartate to produce beta-alanine. The protein is Aspartate 1-decarboxylase of Francisella tularensis subsp. novicida (strain U112).